A 416-amino-acid polypeptide reads, in one-letter code: Gamma-glutamyl phosphate reductase (416 aa).

The protein belongs to the gamma-glutamyl phosphate reductase family.

Its subcellular location is the cytoplasm. The enzyme catalyses L-glutamate 5-semialdehyde + phosphate + NADP(+) = L-glutamyl 5-phosphate + NADPH + H(+). Its pathway is amino-acid biosynthesis; L-proline biosynthesis; L-glutamate 5-semialdehyde from L-glutamate: step 2/2. Catalyzes the NADPH-dependent reduction of L-glutamate 5-phosphate into L-glutamate 5-semialdehyde and phosphate. The product spontaneously undergoes cyclization to form 1-pyrroline-5-carboxylate. In Streptococcus uberis (strain ATCC BAA-854 / 0140J), this protein is Gamma-glutamyl phosphate reductase.